A 420-amino-acid chain; its full sequence is Torsin-4A-A (420 aa).

The helical transmembrane segment at 130–150 (CLLLFIGIVCFQILNAIENLD) threads the bilayer. 202 to 209 (GPSGVGKS) contributes to the ATP binding site.

The protein belongs to the ClpA/ClpB family. Torsin subfamily.

The protein localises to the membrane. This chain is Torsin-4A-A (tor4a-a), found in Xenopus laevis (African clawed frog).